Here is a 304-residue protein sequence, read N- to C-terminus: Quinolinate synthase (304 aa).

Iminosuccinate is bound by residues His23 and Ser40. Cys86 serves as a coordination point for [4Fe-4S] cluster. Iminosuccinate-binding positions include 112–114 (YVN) and Ser129. Cys173 contacts [4Fe-4S] cluster. Iminosuccinate is bound by residues 199-201 (HPE) and Thr216. [4Fe-4S] cluster is bound at residue Cys260.

Belongs to the quinolinate synthase family. Type 2 subfamily. [4Fe-4S] cluster is required as a cofactor.

Its subcellular location is the cytoplasm. The catalysed reaction is iminosuccinate + dihydroxyacetone phosphate = quinolinate + phosphate + 2 H2O + H(+). The protein operates within cofactor biosynthesis; NAD(+) biosynthesis; quinolinate from iminoaspartate: step 1/1. Catalyzes the condensation of iminoaspartate with dihydroxyacetone phosphate to form quinolinate. The sequence is that of Quinolinate synthase from Methanothermobacter thermautotrophicus (strain ATCC 29096 / DSM 1053 / JCM 10044 / NBRC 100330 / Delta H) (Methanobacterium thermoautotrophicum).